The following is a 428-amino-acid chain: Gamma-glutamyl phosphate reductase (428 aa).

This sequence belongs to the gamma-glutamyl phosphate reductase family.

The protein resides in the cytoplasm. It catalyses the reaction L-glutamate 5-semialdehyde + phosphate + NADP(+) = L-glutamyl 5-phosphate + NADPH + H(+). The protein operates within amino-acid biosynthesis; L-proline biosynthesis; L-glutamate 5-semialdehyde from L-glutamate: step 2/2. Functionally, catalyzes the NADPH-dependent reduction of L-glutamate 5-phosphate into L-glutamate 5-semialdehyde and phosphate. The product spontaneously undergoes cyclization to form 1-pyrroline-5-carboxylate. The sequence is that of Gamma-glutamyl phosphate reductase from Agrobacterium fabrum (strain C58 / ATCC 33970) (Agrobacterium tumefaciens (strain C58)).